We begin with the raw amino-acid sequence, 311 residues long: Dof zinc finger protein DOF1.4 (311 aa).

The segment covering 1–12 has biased composition (polar residues); it reads MQSKNMIVASSH. The disordered stretch occupies residues 1 to 29; it reads MQSKNMIVASSHQQQQQQQPQQPQPQLKC. Residues 13–26 are compositionally biased toward low complexity; the sequence is QQQQQQQPQQPQPQ. The Dof-type zinc finger occupies 27 to 81; sequence LKCPRCDSSNTKFCYYNNYSLSQPRHFCKACKRYWTRGGTLRNVPVGGSYRKNKR. Zn(2+) is bound by residues cysteine 29, cysteine 32, cysteine 54, and cysteine 57. The interval 72–110 is disordered; that stretch reads VGGSYRKNKRVKRPSTATTTTASTVSTTNSSSPNNPHQI. Residues 85-107 show a composition bias toward low complexity; it reads PSTATTTTASTVSTTNSSSPNNP.

The protein resides in the nucleus. In terms of biological role, transcription factor that binds specifically to a 5'-AA[AG]G-3' consensus core sequence. The polypeptide is Dof zinc finger protein DOF1.4 (DOF1.4) (Arabidopsis thaliana (Mouse-ear cress)).